The chain runs to 41 residues: Conotoxin Bu22 (41 aa).

The propeptide occupies 1–25; that stretch reads SDRASDGRNAAANDRASDLVALTVR. Cystine bridges form between Cys-27–Cys-33 and Cys-28–Cys-40.

It belongs to the conotoxin A superfamily. Expressed by the venom duct.

It is found in the secreted. This Conus bullatus (Bubble cone) protein is Conotoxin Bu22.